Consider the following 199-residue polypeptide: Protein CPL1 (199 aa).

An N-terminal signal peptide occupies residues 1–30 (MFSIPPSVRRLVFLFLIAAPLLSIVLPVAA). The disordered stretch occupies residues 34–58 (GVDPPSKLQPRAPQPSRRMGATKRS). N-linked (GlcNAc...) asparagine glycosylation occurs at asparagine 148.

Its subcellular location is the secreted. Its function is as follows. Virulence factor which promotes fungal virulence by enhancing type 2 inflammation in the mouse host. Likely binds mouse Tlr4 independently of Ly96/Md2 and activates Tlr4 signaling to drive Stat3 phosphorylation in interstitial macrophages, which promotes the initial induction of Arg1/arginase-1 and increases macrophage sensitivity to Il4 signaling. The chain is Protein CPL1 from Cryptococcus neoformans var. grubii serotype A (strain H99 / ATCC 208821 / CBS 10515 / FGSC 9487) (Filobasidiella neoformans var. grubii).